The chain runs to 372 residues: DNA replication and repair protein RecF (372 aa).

Residue glycine 30–threonine 37 participates in ATP binding.

The protein belongs to the RecF family.

It localises to the cytoplasm. The RecF protein is involved in DNA metabolism; it is required for DNA replication and normal SOS inducibility. RecF binds preferentially to single-stranded, linear DNA. It also seems to bind ATP. The sequence is that of DNA replication and repair protein RecF from Geobacillus thermodenitrificans (strain NG80-2).